Here is a 282-residue protein sequence, read N- to C-terminus: Pantothenate synthetase (282 aa).

Residue 30–37 coordinates ATP; that stretch reads MGYLHEGH. Histidine 37 (proton donor) is an active-site residue. Glutamine 61 contributes to the (R)-pantoate binding site. Glutamine 61 contributes to the beta-alanine binding site. 147-150 provides a ligand contact to ATP; sequence GQKD. Glutamine 153 lines the (R)-pantoate pocket. Residues valine 176 and 184–187 each bind ATP; that span reads LSSR.

Belongs to the pantothenate synthetase family. As to quaternary structure, homodimer.

It localises to the cytoplasm. It carries out the reaction (R)-pantoate + beta-alanine + ATP = (R)-pantothenate + AMP + diphosphate + H(+). The protein operates within cofactor biosynthesis; (R)-pantothenate biosynthesis; (R)-pantothenate from (R)-pantoate and beta-alanine: step 1/1. Catalyzes the condensation of pantoate with beta-alanine in an ATP-dependent reaction via a pantoyl-adenylate intermediate. In Desulfitobacterium hafniense (strain DSM 10664 / DCB-2), this protein is Pantothenate synthetase.